The primary structure comprises 121 residues: Heme-degrading monooxygenase (121 aa).

The region spanning 2 to 101 (IIVTNTIKVE…EQREDRKGIV (100 aa)) is the ABM domain. Asn6 lines the Fe cation pocket. Positions 76-98 (KSDSFKKAHGRTKDTREQREDRK) are disordered. A compositionally biased stretch (basic and acidic residues) spans 78 to 98 (DSFKKAHGRTKDTREQREDRK). Position 84 (His84) interacts with heme.

Belongs to the antibiotic biosynthesis monooxygenase family. Heme-degrading monooxygenase IsdG subfamily. As to quaternary structure, homodimer.

The protein resides in the cytoplasm. It carries out the reaction heme b + 3 reduced [NADPH--hemoprotein reductase] + 3 O2 = biliverdin IXalpha + CO + Fe(2+) + 3 oxidized [NADPH--hemoprotein reductase] + 3 H2O + H(+). Allows bacterial pathogens to use the host heme as an iron source. Catalyzes the oxidative degradation of the heme macrocyclic porphyrin ring to the biliverdin in the presence of a suitable electron donor such as ascorbate or NADPH--cytochrome P450 reductase, with subsequent release of free iron. The polypeptide is Heme-degrading monooxygenase (Listeria innocua serovar 6a (strain ATCC BAA-680 / CLIP 11262)).